The chain runs to 98 residues: MANVQVIFVAYIAVIAFSMVYGDDYKPFGEHNSYYGCKKQTDEFCNKICKLHLAKKGGFCHQPAPFVELCKCLDIDYDNTYFLKAMEKQCPKLKGNVN.

The first 22 residues, 1–22 (MANVQVIFVAYIAVIAFSMVYG), serve as a signal peptide directing secretion. The LCN-type CS-alpha/beta domain occupies 23-91 (DDYKPFGEHN…FLKAMEKQCP (69 aa)). 3 disulfides stabilise this stretch: Cys-37–Cys-60, Cys-45–Cys-70, and Cys-49–Cys-72.

The protein belongs to the long (3 C-C) scorpion toxin superfamily. In terms of assembly, homodimer; disulfide-linked or monomer (edited version) or heterodimer of an alpha chain (AC B8XH01) and this beta chain (non-edited version). In terms of tissue distribution, expressed by the venom gland.

Its subcellular location is the secreted. Its function is as follows. The homodimer inhibits HMG-CoA reductase (HMGCR) (32% of inhibition produced by 0.6 uM), a glycoprotein involved in the control of cholesterol biosynthesis. The inhibitory effects of bumarsin are seen at much lower concentrations (0.6 uM) than that for statins such as atorvastatin (5 mM) and simvastatin (10 uM). In addition to inhibition of HMG-CoA reductase, this protein lowers cholesterol levels by inducing steroid hormone synthesis via StAR, and by increasing reverse cholesterol transport mediated by the induction of ABCA1 and APOA1. Functionally, the heterodimer non-edited LVP1 induces lipolysis in rat adipocytes. Induction of lipolysis by LVP1 appears to be mediated through the beta-2 adrenergic receptor pathway (ADRB2). In terms of biological role, the monomer edited version, similar to alpha-toxins, may modulate voltage-gated sodium channels (Nav) and may block voltage-gated potassium channels (Kv). This is Lipolysis-activating peptide 1-beta chain from Buthus israelis (Israeli scorpion).